Here is a 147-residue protein sequence, read N- to C-terminus: MKLNNSLLLLIVAIIASSNAAETFSNFQVTNSEASSPCVTTPVELKVNTCQSACDSILNVLPVTGSTSKFTFNQFGAQDTKCAATPTSSNEFTCVDGKSKVAIGTTTYSVVCVPDKTNSSESDSSDSTRIGASFALFALALLSMLAL.

Positions methionine 1–alanine 20 are cleaved as a signal peptide. Asparagine 118 carries the GPI-like-anchor amidated asparagine lipid modification. N-linked (GlcNAc...) asparagine glycosylation occurs at asparagine 118. A propeptide spans serine 119 to leucine 147 (removed in mature form).

It belongs to the ponticulin family. Post-translationally, the GPI-like-anchor contains a phosphoceramide group, rather than a phosphatidyl group.

Its subcellular location is the cell membrane. The sequence is that of Ponticulin-like protein C5 (ponC5) from Dictyostelium discoideum (Social amoeba).